The primary structure comprises 143 residues: Small ribosomal subunit protein uS12 (143 aa).

Positions 1-19 (MGKPRGIRTARKHVNHRRE) are enriched in basic residues. Residues 1–21 (MGKPRGIRTARKHVNHRREQR) are disordered. Pro62 is modified (hydroxyproline).

The protein belongs to the universal ribosomal protein uS12 family. As to quaternary structure, component of the 40S small ribosomal subunit.

The protein resides in the cytoplasm. It localises to the cytosol. Its subcellular location is the rough endoplasmic reticulum. The polypeptide is Small ribosomal subunit protein uS12 (RpS23) (Papilio dardanus (African swallowtail butterfly)).